Here is a 188-residue protein sequence, read N- to C-terminus: GMP synthase [glutamine-hydrolyzing] subunit A (188 aa).

Positions 1–188 constitute a Glutamine amidotransferase type-1 domain; that stretch reads MIVIMDNGGQ…RNFAKLCGEL (188 aa). Cys78 serves as the catalytic Nucleophile. Residues His165 and Glu167 contribute to the active site.

As to quaternary structure, heterodimer composed of a glutamine amidotransferase subunit (A) and a GMP-binding subunit (B).

It catalyses the reaction XMP + L-glutamine + ATP + H2O = GMP + L-glutamate + AMP + diphosphate + 2 H(+). It functions in the pathway purine metabolism; GMP biosynthesis; GMP from XMP (L-Gln route): step 1/1. Functionally, catalyzes the synthesis of GMP from XMP. The polypeptide is GMP synthase [glutamine-hydrolyzing] subunit A (Pyrococcus abyssi (strain GE5 / Orsay)).